A 354-amino-acid chain; its full sequence is Green-sensitive opsin-3 (354 aa).

At 1–39 (MSGLNGFEGDNFYIPMSNRTGLVRDPFVYEQYYLAEPWQ) the chain is on the extracellular side. An N-linked (GlcNAc...) asparagine glycan is attached at N18. A helical transmembrane segment spans residues 40–64 (FKLLACYMFFLICLGLPINGFTLFV). The Cytoplasmic segment spans residues 65 to 76 (TAQHKKLQQPLN). The helical transmembrane segment at 77 to 102 (FILVNLAVAGMIMVCFGFTITISSAV) threads the bilayer. At 103 to 116 (NGYFYFGPTACAIE) the chain is on the extracellular side. A disulfide bond links C113 and C190. A helical transmembrane segment spans residues 117 to 136 (GFMATLGGEVALWSLVVLAI). Residues 137–155 (ERYIVVCKPMGSFKFSASH) are Cytoplasmic-facing. A helical transmembrane segment spans residues 156-179 (ALGGIGFTWFMAMTCAAPPLVGWS). At 180–205 (RYIPEGLQCSCGPDYYTLNPKYNNES) the chain is on the extracellular side. N-linked (GlcNAc...) asparagine glycosylation occurs at N203. The helical transmembrane segment at 206 to 233 (YVIYMFVVHFIVPVTVIFFTYGRLVCTV) threads the bilayer. Over 234–255 (KSAAAAQQDSASTQKAEKEVTR) the chain is Cytoplasmic. A helical transmembrane segment spans residues 256 to 279 (MVILMVVGFLVAWTPYATVAAWIF). The Extracellular segment spans residues 280 to 287 (FNKGAAFT). A helical membrane pass occupies residues 288–312 (AQFMAVPAFFSKSSALFNPIIYVLL). K299 is modified (N6-(retinylidene)lysine). Residues 313–354 (NKQFRNCMLTTLFCGKNPLGDEESSTVSTKTEVSTVSSVSPA) are Cytoplasmic-facing.

The protein belongs to the G-protein coupled receptor 1 family. Opsin subfamily. In terms of tissue distribution, the color pigments are found in the cone photoreceptor cells.

It is found in the membrane. Its function is as follows. Visual pigments are the light-absorbing molecules that mediate vision. They consist of an apoprotein, opsin, covalently linked to cis-retinal. The chain is Green-sensitive opsin-3 (RH11) from Psalidodon fasciatus (Banded astyanax).